The sequence spans 445 residues: Histamine H3 receptor (445 aa).

Over 1–39 the chain is Extracellular; that stretch reads MERAPPDGPLNASGALAGEAAAAGGARGFSAAWTAVLAA. An N-linked (GlcNAc...) asparagine glycan is attached at N11. The chain crosses the membrane as a helical span at residues 40–60; the sequence is LMALLIVATVLGNALVMLAFV. The Cytoplasmic segment spans residues 61-70; it reads ADSSLRTQNN. The helical transmembrane segment at 71-91 threads the bilayer; it reads FFLLNLAISDFLVGAFCIPLY. Residues 92 to 108 lie on the Extracellular side of the membrane; it reads VPYVLTGRWTFGRGLCK. A disulfide bridge connects residues C107 and C188. The helical transmembrane segment at 109–129 threads the bilayer; it reads LWLVVDYLLCTSSAFNIVLIS. Topologically, residues 130–156 are cytoplasmic; it reads YDRFLSVTRAVSYRAQQGDTRRAVRKM. A helical transmembrane segment spans residues 157-177; it reads LLVWVLAFLLYGPAILSWEYL. The Extracellular portion of the chain corresponds to 178–196; it reads SGGSSIPEGHCYAEFFYNW. The helical transmembrane segment at 197 to 217 threads the bilayer; sequence YFLITASTLEFFTPFLSVTFF. Topologically, residues 218–359 are cytoplasmic; the sequence is NLSIYLNIQR…LSRDRKVAKS (142 aa). Disordered regions lie at residues 237–260 and 288–336; these read REAA…GCWG and EATL…LEKR. The span at 242–257 shows a compositional bias: pro residues; the sequence is PEPPPEAQPSPPPPPG. Positions 290–299 are enriched in gly residues; the sequence is TLGGGGGGGS. Residues 300–312 are compositionally biased toward low complexity; the sequence is VASPTSSSGSSSR. Residues 360–380 form a helical membrane-spanning segment; it reads LAVIVSIFGLCWAPYTLLMII. At 381 to 395 the chain is on the extracellular side; that stretch reads RAACHGHCVPDYWYE. The chain crosses the membrane as a helical span at residues 396–416; it reads TSFWLLWANSAVNPVLYPLCH. The Cytoplasmic portion of the chain corresponds to 417–445; sequence HSFRRAFTKLLCPQKLKIQPHSSLEHCWK. Phosphoserine is present on S439.

This sequence belongs to the G-protein coupled receptor 1 family. In terms of tissue distribution, expressed predominantly in the CNS, with the greatest expression in the thalamus and caudate nucleus. The various isoforms are mainly coexpressed in brain, but their relative expression level varies in a region-specific manner. Isoform 3 and isoform 7 are highly expressed in the thalamus, caudate nucleus and cerebellum while isoform 5 and isoform 6 show a poor expression. Isoform 5 and isoform 6 show a high expression in the amygdala, substantia nigra, cerebral cortex and hypothalamus. Isoform 7 is not found in hypothalamus or substantia nigra.

It is found in the cell membrane. In terms of biological role, the H3 subclass of histamine receptors could mediate the histamine signals in CNS and peripheral nervous system. Signals through the inhibition of adenylate cyclase and displays high constitutive activity (spontaneous activity in the absence of agonist). Agonist stimulation of isoform 3 neither modified adenylate cyclase activity nor induced intracellular calcium mobilization. The protein is Histamine H3 receptor (HRH3) of Homo sapiens (Human).